A 239-amino-acid polypeptide reads, in one-letter code: Fatty acid metabolism regulator protein (239 aa).

The HTH gntR-type domain occupies 6–74 (QSPAGFAEEY…HGKPTKVNNF (69 aa)). The segment at residues 34-53 (ERELSELIGVTRTTLREVLQ) is a DNA-binding region (H-T-H motif).

In terms of assembly, homodimer.

The protein resides in the cytoplasm. Multifunctional regulator of fatty acid metabolism. This chain is Fatty acid metabolism regulator protein, found in Klebsiella pneumoniae (strain 342).